We begin with the raw amino-acid sequence, 364 residues long: Probable UDP-arabinopyranose mutase 1 (364 aa).

The DXD motif motif lies at 103 to 105 (DDD). A glycan (N-linked (Glc...) arginine) is linked at Arg-151.

This sequence belongs to the RGP family. Homopentamer or homohexamer. Requires Mn(2+) as cofactor. The cofactor is Mg(2+). Post-translationally, reversibly glycosylated by UDP-glucose, UDP-xylose and UDP-galactose, but not UDP-mannose.

Its subcellular location is the secreted. It is found in the cell wall. It localises to the cell junction. The protein resides in the plasmodesma. The protein localises to the golgi apparatus. The catalysed reaction is UDP-beta-L-arabinofuranose = UDP-beta-L-arabinopyranose. Inhibited by inhibitor protein (IP) which may be a form of sucrose synthase. Its function is as follows. Probable UDP-L-arabinose mutase involved in the biosynthesis of cell wall non-cellulosic polysaccharides. Was initially shown to possess an autoglycosylating activity which is dependent on the presence of UDP-glucose and manganese. The sequence is that of Probable UDP-arabinopyranose mutase 1 from Pisum sativum (Garden pea).